We begin with the raw amino-acid sequence, 568 residues long: Malate synthase, glyoxysomal (568 aa).

Positions Met1–Gly20 are disordered. Arg183 functions as the Proton acceptor in the catalytic mechanism. The active-site Proton donor is Asp469. The Microbody targeting signal motif lies at Ser566–Leu568.

This sequence belongs to the malate synthase family.

The protein resides in the glyoxysome. It catalyses the reaction glyoxylate + acetyl-CoA + H2O = (S)-malate + CoA + H(+). It functions in the pathway carbohydrate metabolism; glyoxylate cycle; (S)-malate from isocitrate: step 2/2. The chain is Malate synthase, glyoxysomal from Cucumis sativus (Cucumber).